The primary structure comprises 103 residues: Ubiquitin-related modifier 1 (103 aa).

Position 103 is a 1-thioglycine (glycine 103). Glycine 103 participates in a covalent cross-link: Glycyl lysine isopeptide (Gly-Lys) (interchain with K-? in acceptor proteins).

The protein belongs to the URM1 family. In terms of processing, C-terminal thiocarboxylation occurs in 2 steps, it is first acyl-adenylated (-COAMP) via the hesA/moeB/thiF part of UBA4, then thiocarboxylated (-COSH) via the rhodanese domain of UBA4.

The protein localises to the cytoplasm. The protein operates within tRNA modification; 5-methoxycarbonylmethyl-2-thiouridine-tRNA biosynthesis. In terms of biological role, acts as a sulfur carrier required for 2-thiolation of mcm(5)S(2)U at tRNA wobble positions of cytosolic tRNA(Lys), tRNA(Glu) and tRNA(Gln). Serves as sulfur donor in tRNA 2-thiolation reaction by being thiocarboxylated (-COSH) at its C-terminus by the MOCS3 homolog UBA4. The sulfur is then transferred to tRNA to form 2-thiolation of mcm(5)S(2)U. Prior mcm(5) tRNA modification by the elongator complex is required for 2-thiolation. Also acts as a ubiquitin-like protein (UBL) that is covalently conjugated via an isopeptide bond to lysine residues of target proteins such as AHP1. The thiocarboxylated form serves as substrate for conjugation and oxidative stress specifically induces the formation of UBL-protein conjugates. The chain is Ubiquitin-related modifier 1 from Vanderwaltozyma polyspora (strain ATCC 22028 / DSM 70294 / BCRC 21397 / CBS 2163 / NBRC 10782 / NRRL Y-8283 / UCD 57-17) (Kluyveromyces polysporus).